Here is a 54-residue protein sequence, read N- to C-terminus: Relaxin (54 aa).

The residue at position 1 (glutamine 1) is a Pyrrolidone carboxylic acid. Intrachain disulfides connect cysteine 10–cysteine 41, cysteine 22–cysteine 54, and cysteine 40–cysteine 45.

The protein belongs to the insulin family. In terms of assembly, heterodimer of a B chain and an A chain linked by two disulfide bonds.

The protein resides in the secreted. Functionally, relaxin is an ovarian hormone that acts with estrogen to produce dilatation of the birth canal in many mammals. This is Relaxin from Balaenoptera acutorostrata (Common minke whale).